We begin with the raw amino-acid sequence, 423 residues long: MAKLSPLTLIFIAACLSRILQLTILSGLSKALPLFDTSPSLLLSSPPPALRWDAIHFASVAYNGYEYEQQVAFQPGWLAVMRLAGEGVRFIRAASVVELKDVILGGTIVANVAFVAATLVLYKLTKHIFNPTFAFLTSLLYLLPPTATPSAPYTEPIYSLLTFSGIYLLSIKRQMVLAGLCFAGATTIRSTGIFNSITLMCFAVFGDAHIFDLDPKDYCKIRKKLKPFLSAILVVAPFFMFQHYTETVFCTRELKRASTARPWCSNSPPVSYGFVQKLYWNVGPFEYWTVSQLPNFALAMPILFFSLAGVVKFFSHLVSSSQVLNHGTEEIPPPPILFELYSVHVLTMALLLFTSHTQITLRVCLGDPVVWWNAVKLGFDNVQIGEAPTGQVKVNKFGRYWIGWTVVWGAVAAVLWAGHYPPA.

9 helical membrane-spanning segments follow: residues 7 to 27 (LTLI…ILSG), 102 to 122 (VILG…LVLY), 128 to 148 (IFNP…PTAT), 151 to 171 (APYT…LLSI), 191 to 211 (TGIF…AHIF), 228 to 248 (FLSA…TETV), 298 to 318 (LAMP…SHLV), 333 to 353 (PPPI…LLLF), and 400 to 420 (YWIG…AGHY).

The protein belongs to the PIGV family.

The protein resides in the endoplasmic reticulum membrane. It participates in glycolipid biosynthesis; glycosylphosphatidylinositol-anchor biosynthesis. In terms of biological role, mannosyltransferase involved in glycosylphosphatidylinositol-anchor biosynthesis. Transfers the second mannose to the glycosylphosphatidylinositol during GPI precursor assembly. The polypeptide is GPI mannosyltransferase 2 (GPI18) (Cryptococcus neoformans var. neoformans serotype D (strain JEC21 / ATCC MYA-565) (Filobasidiella neoformans)).